A 1196-amino-acid chain; its full sequence is RNA-dependent RNA polymerase 6 (1196 aa).

This sequence belongs to the RdRP family. Interacts with SGS3. Widely expressed.

It is found in the cytoplasmic granule. The protein resides in the nucleus. It carries out the reaction RNA(n) + a ribonucleoside 5'-triphosphate = RNA(n+1) + diphosphate. Its function is as follows. RNA-dependent RNA polymerase involved in post-transcriptional gene silencing (PTGS). Possesses ssRNA and ssDNA-dependent polymerase activity, but does not have priming activity. Possesses in vitro 3' nucleotidyltransferase activity in the presence of UTP as single nucleotide. Required for the production of 21 nucleotide trans-acting small interfering RNAs (ta-siRNAs) derived from TAS1, TAS2 and TAS3 endogenous transcripts. Acts in the RDR6/SGS3/DCL4/AGO7 ta-siRNA pathway involved in leaf developmental timing. Required for the production of natural siRNAs (nat-siRNAs) derived from cis-natural antisense transcripts. Required for the production of 24 nucleotide nat-siRNAs derived from the stress-related P5CDH-SRO5 antisense gene pair. Required for PTGS induced by transgene direct repeats. Plays an essential role in transitive silencing of transgenes by processing secondary siRNAs. This pathway, which requires DCL2 and DCL4, amplifies silencing by using the target RNA as substrate to generate secondary siRNAs, providing an efficient mechanism for long-distance silencing. Involved in the biogenesis of secondary siRNAs which require 22 nucleotide miRNAs associated to AGO1. Participates synergistically with AS1 and AS2 to proper plant development by repressing the miR165 and miR166 microRNAs (independently of AGO10) that may lead to mRNA degradation of genes in the class III HD-ZIP family. Required for the production of some small RNAs derived from the crucifer-infecting tobamovirus (TMV-cg). Required for sense virus-induced post-transcriptional gene silencing (S-PTGS). This is RNA-dependent RNA polymerase 6 (RDR6) from Arabidopsis thaliana (Mouse-ear cress).